A 289-amino-acid chain; its full sequence is Glycine--tRNA ligase alpha subunit (289 aa).

Belongs to the class-II aminoacyl-tRNA synthetase family. As to quaternary structure, tetramer of two alpha and two beta subunits.

It is found in the cytoplasm. It catalyses the reaction tRNA(Gly) + glycine + ATP = glycyl-tRNA(Gly) + AMP + diphosphate. The polypeptide is Glycine--tRNA ligase alpha subunit (Rickettsia bellii (strain OSU 85-389)).